The following is a 400-amino-acid chain: GTPase Obg (400 aa).

Positions Met1 to Leu159 constitute an Obg domain. The OBG-type G domain maps to Ala160–Asp333. GTP contacts are provided by residues Gly166–Ser173, Phe191–Val195, Asp213–Gly216, Asn283–Asp286, and Thr314–Ile316. Residues Ser173 and Thr193 each coordinate Mg(2+).

The protein belongs to the TRAFAC class OBG-HflX-like GTPase superfamily. OBG GTPase family. Monomer. The cofactor is Mg(2+).

It localises to the cytoplasm. Functionally, an essential GTPase which binds GTP, GDP and possibly (p)ppGpp with moderate affinity, with high nucleotide exchange rates and a fairly low GTP hydrolysis rate. Plays a role in control of the cell cycle, stress response, ribosome biogenesis and in those bacteria that undergo differentiation, in morphogenesis control. This is GTPase Obg from Aeromonas hydrophila subsp. hydrophila (strain ATCC 7966 / DSM 30187 / BCRC 13018 / CCUG 14551 / JCM 1027 / KCTC 2358 / NCIMB 9240 / NCTC 8049).